A 406-amino-acid chain; its full sequence is Phosphatidylinositol 5-phosphate 4-kinase type-2 alpha (406 aa).

N-acetylalanine is present on Ala2. Thr3 is modified (phosphothreonine). Phosphoserine is present on Ser14. The PIPK domain maps to 33 to 405 (ASDPLLSVLM…RFLDFIGHIL (373 aa)). A required for interaction with PIP5K1A region spans residues 59-65 (VMLMPDD). 2 positions are modified to N6-acetyllysine: Lys89 and Lys145. The tract at residues 287–328 (EQEEVECEENEGEEEGESDGAHPIGTPPDSPGNTLNSSPPLA) is disordered. Residues 289-304 (EEVECEENEGEEEGES) are compositionally biased toward acidic residues.

In terms of assembly, homodimer. Interacts with PIP4K2B; the interaction may regulate localization to the nucleus. Probably interacts with PIP5K1A; the interaction inhibits PIP5K1A kinase activity. Post-translationally, phosphorylated in tyrosines. Phosphorylation is induced by light and increases kinase activity.

The protein localises to the cell membrane. It is found in the nucleus. The protein resides in the lysosome. It localises to the cytoplasm. Its subcellular location is the photoreceptor inner segment. The protein localises to the cell projection. It is found in the cilium. The protein resides in the photoreceptor outer segment. The enzyme catalyses a 1,2-diacyl-sn-glycero-3-phospho-(1D-myo-inositol-5-phosphate) + ATP = a 1,2-diacyl-sn-glycero-3-phospho-(1D-myo-inositol-4,5-bisphosphate) + ADP + H(+). It catalyses the reaction 1,2-dihexadecanoyl-sn-glycero-3-phospho-(1D-myo-inositol-5-phosphate) + ATP = 1,2-dihexadecanoyl-sn-glycero-3-phospho-(1D-myo-inositol-4,5-bisphosphate) + ADP + H(+). It carries out the reaction 1,2-dihexadecanoyl-sn-glycero-3-phospho-(1D-myo-inositol-5-phosphate) + GTP = 1,2-dihexadecanoyl-sn-glycero-3-phospho-(1D-myo-inositol-4,5-bisphosphate) + GDP + H(+). Its activity is regulated as follows. In rod outer segments, activated by light. Its function is as follows. Catalyzes the phosphorylation of phosphatidylinositol 5-phosphate (PtdIns5P) on the fourth hydroxyl of the myo-inositol ring, to form phosphatidylinositol 4,5-bisphosphate (PtdIns(4,5)P2). Has both ATP- and GTP-dependent kinase activities. May exert its function by regulating the levels of PtdIns5P, which functions in the cytosol by increasing AKT activity and in the nucleus signals through ING2. May regulate the pool of cytosolic PtdIns5P in response to the activation of tyrosine phosphorylation. Required for lysosome-peroxisome membrane contacts and intracellular cholesterol transport through modulating peroxisomal PtdIns(4,5)P2 level. In collaboration with PIP4K2B, has a role in mediating autophagy in times of nutrient stress. Required for autophagosome-lysosome fusion and the regulation of cellular lipid metabolism. Negatively regulates insulin signaling through a catalytic-independent mechanism. PIP4Ks interact with PIP5Ks and suppress PIP5K-mediated PtdIns(4,5)P2 synthesis and insulin-dependent conversion to PtdIns(3,4,5)P3. May be involved in thrombopoiesis, and the terminal maturation of megakaryocytes and regulation of their size. The chain is Phosphatidylinositol 5-phosphate 4-kinase type-2 alpha from Rattus norvegicus (Rat).